We begin with the raw amino-acid sequence, 201 residues long: UPF0301 protein RER_60040 (201 aa).

This sequence belongs to the UPF0301 (AlgH) family.

In Rhodococcus erythropolis (strain PR4 / NBRC 100887), this protein is UPF0301 protein RER_60040.